The chain runs to 545 residues: Acetyltransferase BOT5 (545 aa).

Positions 1-19 are cleaved as a signal peptide; that stretch reads MATIPLFFSLILFLRLYHA. Asn70 and Asn198 each carry an N-linked (GlcNAc...) asparagine glycan. The active-site Proton acceptor is the His208. N-linked (GlcNAc...) asparagine glycosylation is found at Asn346 and Asn445. Residues 466–493 are disordered; that stretch reads GAGNQKSSSTRKAARHTEPTQAQTQPGR.

This sequence belongs to the plant acyltransferase family.

The protein operates within secondary metabolite biosynthesis. Its function is as follows. Acetyltransferase; part of the gene cluster that mediates the biosynthesis of botrydial. Botrydial is necessary for colonization of plant tissue by the T4 strain. It is a strain-dependent virulence factor since highly aggressive strains like SAS56 or B05 still retain substantial virulence when botrydial synthesis is impaired, since they produce also botcinic acid. The first step of botrydial biosynthesis is performed by the sesquiterpene synthase BOT2 which catalyzes the cyclization of farnesyl diphosphate (FPP) to presilphiperfolan-8-beta-ol (PSP). The cytochrome P450 monooxygenase BOT4 then catalyzes the hydroxylation at C-4 to give a probotryane intermediate. Acetylation of the hydroxyl at C-4 is carried out by the acetyltransferase BOT5, followed by the combined action of the P450 monooxygenases BOT3 and BOT1, to yield finally the glycol, via the regio- and stereospecific hydroxylations at C-10 and C-15 of the probotryane intermediates, respectively. The cleavage of the C10-C15 bond of probotryane skeleton is an intriguing and chemically important reaction, which could be mediated by some of the monooxygenases or by a combination of them. It is possible that either BOT3 or BOT1 would oxidize either the 10- or the 15-hydroxy group to the hydroperoxide derivative, which would then undergo heterolytic fragmentation to give the dialdehyde botrydial. Finally, the dehydrogenase BOT7 might be involved in the conversion of botrydial to dihydrobotrydial. The polypeptide is Acetyltransferase BOT5 (Botryotinia fuckeliana (Noble rot fungus)).